A 113-amino-acid polypeptide reads, in one-letter code: Nucleoid-associated protein Syncc9902_0023 (113 aa).

The protein belongs to the YbaB/EbfC family. In terms of assembly, homodimer.

The protein resides in the cytoplasm. It is found in the nucleoid. Functionally, binds to DNA and alters its conformation. May be involved in regulation of gene expression, nucleoid organization and DNA protection. This chain is Nucleoid-associated protein Syncc9902_0023, found in Synechococcus sp. (strain CC9902).